A 426-amino-acid chain; its full sequence is Glutamyl-tRNA(Gln) amidotransferase subunit D (426 aa).

Residues 82 to 413 (KNISILSTGG…KDAKKLICKN (332 aa)) enclose the Asparaginase/glutaminase domain. Residues threonine 92, threonine 168, aspartate 169, and lysine 245 contribute to the active site.

It belongs to the asparaginase 1 family. GatD subfamily. In terms of assembly, heterodimer of GatD and GatE.

It catalyses the reaction L-glutamyl-tRNA(Gln) + L-glutamine + ATP + H2O = L-glutaminyl-tRNA(Gln) + L-glutamate + ADP + phosphate + H(+). Allows the formation of correctly charged Gln-tRNA(Gln) through the transamidation of misacylated Glu-tRNA(Gln) in organisms which lack glutaminyl-tRNA synthetase. The reaction takes place in the presence of glutamine and ATP through an activated gamma-phospho-Glu-tRNA(Gln). The GatDE system is specific for glutamate and does not act on aspartate. The sequence is that of Glutamyl-tRNA(Gln) amidotransferase subunit D from Methanococcus vannielii (strain ATCC 35089 / DSM 1224 / JCM 13029 / OCM 148 / SB).